Consider the following 379-residue polypeptide: Carbamoyl phosphate synthase small chain (379 aa).

A CPSase region spans residues 1 to 184; sequence MVSLYLENGL…LDYKPFDEKN (184 aa). L-glutamine contacts are provided by Ser-44, Gly-240, and Gly-242. Positions 188 to 378 constitute a Glutamine amidotransferase type-1 domain; it reads TIAVLDFGAK…VKLLENFPTR (191 aa). Catalysis depends on Cys-268, which acts as the Nucleophile. The L-glutamine site is built by Leu-269, Gln-272, Asn-310, and Tyr-313. Residues His-351 and Glu-353 contribute to the active site.

Belongs to the CarA family. In terms of assembly, composed of two chains; the small (or glutamine) chain promotes the hydrolysis of glutamine to ammonia, which is used by the large (or ammonia) chain to synthesize carbamoyl phosphate. Tetramer of heterodimers (alpha,beta)4.

The enzyme catalyses hydrogencarbonate + L-glutamine + 2 ATP + H2O = carbamoyl phosphate + L-glutamate + 2 ADP + phosphate + 2 H(+). It carries out the reaction L-glutamine + H2O = L-glutamate + NH4(+). It functions in the pathway amino-acid biosynthesis; L-arginine biosynthesis; carbamoyl phosphate from bicarbonate: step 1/1. Its pathway is pyrimidine metabolism; UMP biosynthesis via de novo pathway; (S)-dihydroorotate from bicarbonate: step 1/3. In terms of biological role, small subunit of the glutamine-dependent carbamoyl phosphate synthetase (CPSase). CPSase catalyzes the formation of carbamoyl phosphate from the ammonia moiety of glutamine, carbonate, and phosphate donated by ATP, constituting the first step of 2 biosynthetic pathways, one leading to arginine and/or urea and the other to pyrimidine nucleotides. The small subunit (glutamine amidotransferase) binds and cleaves glutamine to supply the large subunit with the substrate ammonia. The polypeptide is Carbamoyl phosphate synthase small chain (Helicobacter acinonychis (strain Sheeba)).